Here is a 233-residue protein sequence, read N- to C-terminus: Protein-L-isoaspartate O-methyltransferase (233 aa).

The active site involves Ser83.

The protein belongs to the methyltransferase superfamily. L-isoaspartyl/D-aspartyl protein methyltransferase family.

Its subcellular location is the cytoplasm. The enzyme catalyses [protein]-L-isoaspartate + S-adenosyl-L-methionine = [protein]-L-isoaspartate alpha-methyl ester + S-adenosyl-L-homocysteine. Catalyzes the methyl esterification of L-isoaspartyl residues in peptides and proteins that result from spontaneous decomposition of normal L-aspartyl and L-asparaginyl residues. It plays a role in the repair and/or degradation of damaged proteins. The polypeptide is Protein-L-isoaspartate O-methyltransferase (Opitutus terrae (strain DSM 11246 / JCM 15787 / PB90-1)).